Reading from the N-terminus, the 389-residue chain is Type II methyltransferase M2.BsuMI (389 aa).

The 299-residue stretch at 1–299 folds into the SAM-dependent MTase C5-type domain; that stretch reads MKVVSLFSGI…ENLSQPKGSI (299 aa). C69 is an active-site residue.

Belongs to the class I-like SAM-binding methyltransferase superfamily. C5-methyltransferase family. Monomer. May form a complex with YdiP, also seems to be active alone.

The catalysed reaction is a 2'-deoxycytidine in DNA + S-adenosyl-L-methionine = a 5-methyl-2'-deoxycytidine in DNA + S-adenosyl-L-homocysteine + H(+). With respect to regulation, somewhat inhibited by MgCl(2) and spermidine, strongly inhibited by MnCl(2). A methylase, recognizes the double-stranded sequence 5'-YTCGAR-3', methylates C-3 on both strands, and protects the DNA from cleavage by the BsuMI endonuclease. The polypeptide is Type II methyltransferase M2.BsuMI (ydiP) (Bacillus subtilis (strain 168)).